We begin with the raw amino-acid sequence, 301 residues long: Mitochondrial carnitine/acylcarnitine carrier protein (301 aa).

An N-acetylalanine modification is found at A2. Residues 2–12 lie on the Cytoplasmic side of the membrane; sequence ADQPKPISPLK. Solcar repeat units lie at residues 8 to 99, 108 to 196, and 207 to 293; these read ISPL…GKKL, LSYP…VKNI, and LSVP…AMKF. The chain crosses the membrane as a helical span at residues 13-31; that stretch reads NLLAGGFGGVCLVFVGHPL. Over 32–73 the chain is Mitochondrial matrix; it reads DTVKVRLQTQPPSLPGQPPMYSGTFDCFRKTLFREGIRGLYR. The chain crosses the membrane as a helical span at residues 74–93; the sequence is GMAAPIIGVTPMFAVCFFGF. Over 94-112 the chain is Cytoplasmic; sequence GLGKKLQQKHPEDVLSYPQ. A helical membrane pass occupies residues 113–131; it reads LFAAGMLSGIFTTGIMTPG. Over 132-170 the chain is Mitochondrial matrix; the sequence is ERIKCLLQIQASSGETKYTGTLDCAKKLYQEFGIRGIYK. N6-acetyllysine occurs at positions 148 and 157. The residue at position 170 (K170) is an N6-acetyllysine; alternate. The residue at position 170 (K170) is an N6-succinyllysine; alternate. A helical transmembrane segment spans residues 171–190; that stretch reads GTVVTLMRDVPASGMYFMTY. The Cytoplasmic portion of the chain corresponds to 191–211; that stretch reads EWVKNIFTPEGKRVSELSVPR. A helical membrane pass occupies residues 212-230; sequence VLVAGGIAGIFNWAVAIPP. At 231–267 the chain is on the mitochondrial matrix side; it reads DVLKSRFQTAPPGKYPNGFRDVLRELIPDEGVTSLYK. Residues 268–287 traverse the membrane as a helical segment; it reads GFNAVMIRAFPANAACFLGF. Topologically, residues 288-301 are cytoplasmic; that stretch reads EVAMKFLNWATPNL.

The protein belongs to the mitochondrial carrier (TC 2.A.29) family.

The protein localises to the mitochondrion inner membrane. It catalyses the reaction O-acetyl-(R)-carnitine(in) + (R)-carnitine(out) = O-acetyl-(R)-carnitine(out) + (R)-carnitine(in). The catalysed reaction is an O-acyl-(R)-carnitine(in) + (R)-carnitine(out) = an O-acyl-(R)-carnitine(out) + (R)-carnitine(in). It carries out the reaction O-propanoyl-(R)-carnitine(in) + (R)-carnitine(out) = O-propanoyl-(R)-carnitine(out) + (R)-carnitine(in). The enzyme catalyses O-hexadecanoyl-(R)-carnitine(in) + (R)-carnitine(out) = O-hexadecanoyl-(R)-carnitine(out) + (R)-carnitine(in). It catalyses the reaction O-octanoyl-(R)-carnitine(in) + (R)-carnitine(out) = O-octanoyl-(R)-carnitine(out) + (R)-carnitine(in). The catalysed reaction is (R)-carnitine(in) = (R)-carnitine(out). Functionally, mediates the electroneutral exchange of acylcarnitines (O-acyl-(R)-carnitine or L-acylcarnitine) of different acyl chain lengths (ranging from O-acetyl-(R)-carnitine to long-chain O-acyl-(R)-carnitines) with free carnitine ((R)-carnitine or L-carnitine) across the mitochondrial inner membrane, via a ping-pong mechanism. Key player in the mitochondrial oxidation pathway, it translocates the fatty acids in the form of acylcarnitines into the mitochondrial matrix, where the carnitine palmitoyltransferase 2 (CPT-2) activates them to undergo fatty acid beta-oxidation. Catalyzes the unidirectional transport (uniport) of carnitine at lower rates than the antiport (exchange). The sequence is that of Mitochondrial carnitine/acylcarnitine carrier protein (SLC25A20) from Macaca fascicularis (Crab-eating macaque).